Reading from the N-terminus, the 1191-residue chain is Pyruvate-flavodoxin oxidoreductase (1191 aa).

2 consecutive 4Fe-4S ferredoxin-type domains span residues 687 to 716 and 744 to 773; these read QVCSWDADLCIQCNKCVMVCPHAALRVKAV and YVLALSPEDCTGCGICVEACPGKDKATGAR. Positions 696, 699, 702, 706, 753, 756, 759, 763, 825, 828, 853, and 1085 each coordinate [4Fe-4S] cluster.

This sequence belongs to the pyruvate:ferredoxin/flavodoxin oxidoreductase family. The cofactor is [4Fe-4S] cluster.

It carries out the reaction oxidized [flavodoxin] + pyruvate + CoA + 2 H(+) = reduced [flavodoxin] + acetyl-CoA + CO2. In terms of biological role, oxidoreductase required for the transfer of electrons from pyruvate to flavodoxin, which reduces nitrogenase. The protein is Pyruvate-flavodoxin oxidoreductase (nifJ) of Rhodospirillum rubrum (strain ATCC 11170 / ATH 1.1.1 / DSM 467 / LMG 4362 / NCIMB 8255 / S1).